The primary structure comprises 1048 residues: FERM, ARHGEF and pleckstrin domain-containing protein 1 (1048 aa).

Residues 1–37 are disordered; that stretch reads MGEIEQKPTPASRLGAPENSGISTLERGQKPPPTPSG. Phosphoserine occurs at positions 20 and 23. Residue Thr24 is modified to Phosphothreonine. Residues 40–320 enclose the FERM domain; it reads MTVKIQMLDD…EHHAFFRLFE (281 aa). Phosphoserine occurs at positions 340, 373, 389, 403, 427, 433, and 437. The disordered stretch occupies residues 361–536; sequence FERKHSKIHS…TDDEEEGRRK (176 aa). Positions 371–395 are enriched in polar residues; it reads TRSLVSQPTAPNSEVPKQSPQSASL. Composition is skewed to polar residues over residues 472 to 491 and 498 to 513; these read STGS…NSQG and VTLS…QASP. 2 positions are modified to phosphoserine: Ser512 and Ser516. The DH domain occupies 542-733; it reads KAYYIAKEVS…TEMVAQLHGT (192 aa). The 98-residue stretch at 762–859 folds into the PH 1 domain; the sequence is EFIRLGSLSK…WMEDIQMAID (98 aa). 3 positions are modified to phosphoserine: Ser836, Ser875, and Ser881. Residues 865–907 are disordered; that stretch reads NGPTPELLASSPPDNKSPDEATAADQESEDDLSASRTSLERQA. A Phosphothreonine modification is found at Thr886. A phosphoserine mark is found at Ser892, Ser899, and Ser902. Residues 935–1032 enclose the PH 2 domain; sequence ENQLSGNLLR…WMEVIRSATS (98 aa).

As to quaternary structure, interacts with CADM1. Interacts with RAC1. In terms of tissue distribution, detected in brain cortex, hippocampus, striatum, olfactory bulb, cerebellum and hindbrain (at protein level).

The protein localises to the cell membrane. It is found in the synapse. The protein resides in the synaptosome. Its subcellular location is the cytoplasm. It localises to the cytosol. The protein localises to the cell projection. It is found in the filopodium. The protein resides in the dendrite. Its subcellular location is the dendritic spine. Functionally, functions as a guanine nucleotide exchange factor for RAC1. May play a role in semaphorin signaling. Plays a role in the assembly and disassembly of dendritic filopodia, the formation of dendritic spines, regulation of dendrite length and ultimately the formation of synapses. The protein is FERM, ARHGEF and pleckstrin domain-containing protein 1 (Farp1) of Mus musculus (Mouse).